We begin with the raw amino-acid sequence, 259 residues long: MQIHDKPTLKAEARNLNFYYGEAKALKGINMPIYDKKVTALIGPSGCGKSTYLRSFNRMHDLYPGNRYEGEIRFFPDNTNLLSPEVDPIEVRMRVGMVFQKPNPFPKTIYENVAYGLRVRGENNKRALDDKVEHALRGAAIWDEVKDRLQDMAPNLSGGQQQRLCIARALATDPELLLFDEPTSALDPIATGAIEELVHELKKRVTILIVTHNMQQAARVSDYTAYMYLGELIEFGKTDEIFIKPQDKRTEDYITGRMG.

The region spanning 11–254 (AEARNLNFYY…PQDKRTEDYI (244 aa)) is the ABC transporter domain. Position 43 to 50 (43 to 50 (GPSGCGKS)) interacts with ATP.

It belongs to the ABC transporter superfamily. Phosphate importer (TC 3.A.1.7) family. The complex is composed of two ATP-binding proteins (PstB), two transmembrane proteins (PstC and PstA) and a solute-binding protein (PstS).

The protein localises to the cell inner membrane. It carries out the reaction phosphate(out) + ATP + H2O = ADP + 2 phosphate(in) + H(+). Part of the ABC transporter complex PstSACB involved in phosphate import. Responsible for energy coupling to the transport system. The sequence is that of Phosphate import ATP-binding protein PstB from Dechloromonas aromatica (strain RCB).